Here is a 239-residue protein sequence, read N- to C-terminus: Enolase-phosphatase E1 (239 aa).

The protein belongs to the HAD-like hydrolase superfamily. MasA/MtnC family. In terms of assembly, monomer. Requires Mg(2+) as cofactor.

The catalysed reaction is 5-methylsulfanyl-2,3-dioxopentyl phosphate + H2O = 1,2-dihydroxy-5-(methylsulfanyl)pent-1-en-3-one + phosphate. Its pathway is amino-acid biosynthesis; L-methionine biosynthesis via salvage pathway; L-methionine from S-methyl-5-thio-alpha-D-ribose 1-phosphate: step 3/6. It participates in amino-acid biosynthesis; L-methionine biosynthesis via salvage pathway; L-methionine from S-methyl-5-thio-alpha-D-ribose 1-phosphate: step 4/6. Functionally, bifunctional enzyme that catalyzes the enolization of 2,3-diketo-5-methylthiopentyl-1-phosphate (DK-MTP-1-P) into the intermediate 2-hydroxy-3-keto-5-methylthiopentenyl-1-phosphate (HK-MTPenyl-1-P), which is then dephosphorylated to form the acireductone 1,2-dihydroxy-3-keto-5-methylthiopentene (DHK-MTPene). In Streptomyces avermitilis (strain ATCC 31267 / DSM 46492 / JCM 5070 / NBRC 14893 / NCIMB 12804 / NRRL 8165 / MA-4680), this protein is Enolase-phosphatase E1.